Reading from the N-terminus, the 130-residue chain is Phosphomevalonate dehydratase small subunit (130 aa).

Catalysis depends on Ser-62, which acts as the Proton acceptor.

This sequence belongs to the AcnX type II small subunit family. Heterodimer composed of a large subunit (PMDh-L) and a small subunit (PMDh-S).

The enzyme catalyses (R)-5-phosphomevalonate = (2E)-3-methyl-5-phosphooxypent-2-enoate + H2O. The protein operates within isoprenoid biosynthesis; isopentenyl diphosphate biosynthesis via mevalonate pathway. Its function is as follows. Component of a hydro-lyase that catalyzes the dehydration of mevalonate 5-phosphate (MVA5P) to form trans-anhydromevalonate 5-phosphate (tAHMP). Involved in the archaeal mevalonate (MVA) pathway, which provides fundamental precursors for isoprenoid biosynthesis, such as isopentenyl diphosphate (IPP) and dimethylallyl diphosphate (DMAPP). In Thermococcus sibiricus (strain DSM 12597 / MM 739), this protein is Phosphomevalonate dehydratase small subunit.